A 137-amino-acid polypeptide reads, in one-letter code: Hemoglobin subunit beta (137 aa).

A Globin domain is found at 3-137 (HWTQEERDEI…VIDAISKQYH (135 aa)). Residues histidine 54 and histidine 83 each coordinate heme b.

The protein belongs to the globin family. In terms of assembly, heterotetramer of two alpha chains and two beta chains. Red blood cells.

Functionally, involved in oxygen transport from gills to the various peripheral tissues. This is Hemoglobin subunit beta (HBB) from Mustelus griseus (Spotless smooth-hound).